The following is a 101-amino-acid chain: U-scoloptoxin(10)-Sm2a (101 aa).

An N-terminal signal peptide occupies residues 1-23 (MNKSMIILCAVLFLTYIIEENEA).

It belongs to the scoloptoxin-10 family. Contains 3 disulfide bonds. In terms of tissue distribution, expressed by the venom gland.

It is found in the secreted. The polypeptide is U-scoloptoxin(10)-Sm2a (Scolopendra morsitans (Tanzanian blue ringleg centipede)).